A 302-amino-acid polypeptide reads, in one-letter code: Beta-casein (302 aa).

The signal sequence occupies residues 1-15 (MKLLILTCLVALGFA). Serine 23 and serine 25 each carry phosphoserine. A run of 16 repeats spans residues 144–151 (KREMLPIY), 152–159 (ERERLPAH), 160–167 (KRESLLAH), 168–175 (ERESLLAH), 176–182 (ERDILVP), 183–190 (QREMSFVP), 191–198 (EREFLFAS), 199–204 (ERVVLP), 205–214 (EQEKEILHND), 215–222 (EREVLAVH), 223–230 (KKEILPPF), 231–238 (EKEKVLPL), 241–247 (HRVVPLP), 248–255 (QREIVPPF), 256–262 (QRETLLP), and 263–269 (EEILPVN). Residues 144–269 (KREMLPIYER…LLPEEILPVN (126 aa)) are 16 X approximate tandem repeats.

The protein belongs to the beta-casein family. Mammary gland specific. Secreted in milk.

It is found in the secreted. Functionally, important role in determination of the surface properties of the casein micelles. This chain is Beta-casein (CSN2), found in Notamacropus eugenii (Tammar wallaby).